Consider the following 556-residue polypeptide: Arginine--tRNA ligase (556 aa).

A 'HIGH' region motif is present at residues 132-142; sequence ANPTGDLHLGH.

The protein belongs to the class-I aminoacyl-tRNA synthetase family. Monomer.

The protein localises to the cytoplasm. The catalysed reaction is tRNA(Arg) + L-arginine + ATP = L-arginyl-tRNA(Arg) + AMP + diphosphate. In Listeria monocytogenes serotype 4b (strain F2365), this protein is Arginine--tRNA ligase.